A 443-amino-acid chain; its full sequence is Ribulose bisphosphate carboxylase large chain (443 aa).

The substrate site is built by asparagine 89 and threonine 139. Lysine 141 functions as the Proton acceptor in the catalytic mechanism. Lysine 143 provides a ligand contact to substrate. Lysine 167, aspartate 169, and glutamate 170 together coordinate Mg(2+). Lysine 167 bears the N6-carboxylysine mark. Histidine 260 acts as the Proton acceptor in catalysis. Arginine 261, histidine 293, and serine 345 together coordinate substrate.

The protein belongs to the RuBisCO large chain family. Type I subfamily. As to quaternary structure, heterohexadecamer of 8 large chains and 8 small chains; disulfide-linked. The disulfide link is formed within the large subunit homodimers. Mg(2+) serves as cofactor. The disulfide bond which can form in the large chain dimeric partners within the hexadecamer appears to be associated with oxidative stress and protein turnover.

It is found in the plastid. Its subcellular location is the chloroplast. The enzyme catalyses 2 (2R)-3-phosphoglycerate + 2 H(+) = D-ribulose 1,5-bisphosphate + CO2 + H2O. It catalyses the reaction D-ribulose 1,5-bisphosphate + O2 = 2-phosphoglycolate + (2R)-3-phosphoglycerate + 2 H(+). In terms of biological role, ruBisCO catalyzes two reactions: the carboxylation of D-ribulose 1,5-bisphosphate, the primary event in carbon dioxide fixation, as well as the oxidative fragmentation of the pentose substrate in the photorespiration process. Both reactions occur simultaneously and in competition at the same active site. The polypeptide is Ribulose bisphosphate carboxylase large chain (Villarsia calthifolia (Marsh flower)).